Consider the following 121-residue polypeptide: Two-component response regulator ORR12 (121 aa).

Positions 5-121 constitute a Response regulatory domain; it reads HVLVVDDTLV…VDLPRILNYI (117 aa). Asp-55 carries the 4-aspartylphosphate modification.

This sequence belongs to the ARR family. Type-A subfamily. Two-component system major event consists of a His-to-Asp phosphorelay between a sensor histidine kinase (HK) and a response regulator (RR). In plants, the His-to-Asp phosphorelay involves an additional intermediate named Histidine-containing phosphotransfer protein (HPt). This multistep phosphorelay consists of a His-Asp-His-Asp sequential transfer of a phosphate group between first a His and an Asp of the HK protein, followed by the transfer to a conserved His of the HPt protein and finally the transfer to an Asp in the receiver domain of the RR protein. In terms of tissue distribution, expressed in flowers and panicles.

Its function is as follows. Functions as a response regulator involved in His-to-Asp phosphorelay signal transduction system. Phosphorylation of the Asp residue in the receiver domain activates the ability of the protein to promote the transcription of target genes. Type-A response regulators seem to act as negative regulators of the cytokinin signaling. The protein is Two-component response regulator ORR12 of Oryza sativa subsp. japonica (Rice).